The primary structure comprises 455 residues: Kynurenine--oxoglutarate transaminase 3 (455 aa).

Residue Gly-72 participates in substrate binding. Lys-117 is modified (N6-acetyllysine; alternate). Lys-117 is modified (N6-succinyllysine; alternate). Asn-219 is a substrate binding site. Position 281 is an N6-(pyridoxal phosphate)lysine (Lys-281). Residue Arg-430 participates in substrate binding.

It belongs to the class-I pyridoxal-phosphate-dependent aminotransferase family. As to quaternary structure, homodimer. The cofactor is pyridoxal 5'-phosphate. As to expression, widely expressed, with higher expression levels in liver, kidney, heart and neuroendocrine tissues.

The enzyme catalyses L-kynurenine + 2-oxoglutarate = kynurenate + L-glutamate + H2O. It catalyses the reaction L-kynurenine + glyoxylate = kynurenate + glycine + H2O. The catalysed reaction is 3-hydroxy-L-kynurenine + glyoxylate = xanthurenate + glycine + H2O. It carries out the reaction an S-substituted L-cysteine + H2O = a thiol + pyruvate + NH4(+). The protein operates within amino-acid degradation; L-kynurenine degradation; kynurenate from L-kynurenine: step 1/2. With respect to regulation, kynurenine transamination is competitively inhibited by cysteine, glutamine, histidine, methionine, leucine, or phenylalanine. Catalyzes the irreversible transamination of the L-tryptophan metabolite L-kynurenine to form kynurenic acid (KA), an intermediate in the tryptophan catabolic pathway which is also a broad spectrum antagonist of the three ionotropic excitatory amino acid receptors among others. May catalyze the beta-elimination of S-conjugates and Se-conjugates of L-(seleno)cysteine, resulting in the cleavage of the C-S or C-Se bond. Has transaminase activity towards L-kynurenine, tryptophan, phenylalanine, serine, cysteine, methionine, histidine, glutamine and asparagine with glyoxylate as an amino group acceptor (in vitro). Has lower activity with 2-oxoglutarate as amino group acceptor (in vitro). This is Kynurenine--oxoglutarate transaminase 3 (Kyat3) from Mus musculus (Mouse).